Reading from the N-terminus, the 351-residue chain is uncharacterized protein (351 aa).

Residues 1-61 (MNDKRKPSFQ…RDKQEVKETR (61 aa)) are disordered. Basic and acidic residues-rich tracts occupy residues 16–38 (FQERSVGEKYREKPTQNRPHFND) and 44–61 (RNEKSRFPRDKQEVKETR).

It belongs to the class IV-like SAM-binding methyltransferase superfamily. RNA methyltransferase TrmH family.

This is an uncharacterized protein from Haemophilus influenzae (strain ATCC 51907 / DSM 11121 / KW20 / Rd).